The chain runs to 357 residues: 4-hydroxy-3-methylbut-2-en-1-yl diphosphate synthase (flavodoxin) (357 aa).

[4Fe-4S] cluster contacts are provided by Cys264, Cys267, Cys299, and Glu306.

The protein belongs to the IspG family. [4Fe-4S] cluster is required as a cofactor.

The enzyme catalyses (2E)-4-hydroxy-3-methylbut-2-enyl diphosphate + oxidized [flavodoxin] + H2O + 2 H(+) = 2-C-methyl-D-erythritol 2,4-cyclic diphosphate + reduced [flavodoxin]. It functions in the pathway isoprenoid biosynthesis; isopentenyl diphosphate biosynthesis via DXP pathway; isopentenyl diphosphate from 1-deoxy-D-xylulose 5-phosphate: step 5/6. Its function is as follows. Converts 2C-methyl-D-erythritol 2,4-cyclodiphosphate (ME-2,4cPP) into 1-hydroxy-2-methyl-2-(E)-butenyl 4-diphosphate. This is 4-hydroxy-3-methylbut-2-en-1-yl diphosphate synthase (flavodoxin) from Campylobacter jejuni subsp. jejuni serotype O:23/36 (strain 81-176).